The primary structure comprises 278 residues: uncharacterized protein (278 aa).

The span at 127–151 shows a compositional bias: pro residues; the sequence is PPTPSPPPPPAPTQPTRPTPGPAFF. The segment at 127-174 is disordered; it reads PPTPSPPPPPAPTQPTRPTPGPAFFPQPFKVELHHPTPKTSSLPAPSL. Residues 164-174 show a composition bias toward low complexity; the sequence is PKTSSLPAPSL.

This is an uncharacterized protein from Botryotinia fuckeliana (Noble rot fungus).